A 152-amino-acid chain; its full sequence is Small ribosomal subunit protein uS5 (152 aa).

Positions 14-77 (FEEVIVNIGR…DDAHKNLVKV (64 aa)) constitute an S5 DRBM domain.

Belongs to the universal ribosomal protein uS5 family. In terms of assembly, part of the 30S ribosomal subunit. Contacts proteins S4 and S8.

In terms of biological role, with S4 and S12 plays an important role in translational accuracy. Its function is as follows. Located at the back of the 30S subunit body where it stabilizes the conformation of the head with respect to the body. This is Small ribosomal subunit protein uS5 from Sulfurovum sp. (strain NBC37-1).